A 382-amino-acid chain; its full sequence is MYIAGVMSGTSLDGIDVALVRIEGSGVESKVELIHFTTVPFCNDIKSEIQQALSIENSNVQLICSLNFKLGLCFANAVKEVCKEANFSLEQLDLIGSHGQTIYHQPKQDGNRIPSTLQIGEPAVIAYETNTTVISNFRTMDMAAGGQGAPLVPYSEVILYRDPSKNRLLQNIGGISNVTVIPTQQSDQNVIAFDTGPGNMIIDEVCQRLFQLPYDQNGEIAKKGVVVDEILTYCMSHPFLKMNPPKSTGREQFGEEFVSELLKRFKKHSKENILTTVTMFTASSIVHHYKKFILPYYEIDEVILGGGGSYNSTLVEMLRNGLKDENCTIFIQEDIGYSSEAKEAIAFAILANETHHRNPSNVPSATGAKQSVVLGNVTFPPI.

9–16 lines the ATP pocket; it reads GTSLDGID.

This sequence belongs to the anhydro-N-acetylmuramic acid kinase family.

The enzyme catalyses 1,6-anhydro-N-acetyl-beta-muramate + ATP + H2O = N-acetyl-D-muramate 6-phosphate + ADP + H(+). The protein operates within amino-sugar metabolism; 1,6-anhydro-N-acetylmuramate degradation. It functions in the pathway cell wall biogenesis; peptidoglycan recycling. Catalyzes the specific phosphorylation of 1,6-anhydro-N-acetylmuramic acid (anhMurNAc) with the simultaneous cleavage of the 1,6-anhydro ring, generating MurNAc-6-P. Is required for the utilization of anhMurNAc either imported from the medium or derived from its own cell wall murein, and thus plays a role in cell wall recycling. The protein is Anhydro-N-acetylmuramic acid kinase of Bacillus cereus (strain ZK / E33L).